Here is a 421-residue protein sequence, read N- to C-terminus: Tyrosine-protein phosphatase non-receptor type 20 (421 aa).

A disordered region spans residues 1 to 58 (MSSPGNVRQKHGRDNDEHEGDSDDLNLQKSLPSSSQQKTPTKPVFGNKVNSESVKTSH). The span at 27–41 (LQKSLPSSSQQKTPT) shows a compositional bias: low complexity. Residues 48-58 (KVNSESVKTSH) are compositionally biased toward polar residues. A Phosphoserine modification is found at S76. The interval 93–116 (RWSSVDPESAGPSKTVSTVLSESS) is disordered. Positions 104 to 116 (PSKTVSTVLSESS) are enriched in polar residues. Phosphoserine is present on S122. The region spanning 160–413 (IIREFLELEE…QFCYEIVLEV (254 aa)) is the Tyrosine-protein phosphatase domain. Residues D324, 354-360 (CSAGVGR), and Q398 contribute to the substrate site. C354 acts as the Phosphocysteine intermediate in catalysis.

This sequence belongs to the protein-tyrosine phosphatase family. Non-receptor class subfamily.

Its subcellular location is the nucleus. It is found in the cytoplasm. The protein resides in the cytoskeleton. It localises to the microtubule organizing center. The protein localises to the centrosome. It carries out the reaction O-phospho-L-tyrosyl-[protein] + H2O = L-tyrosyl-[protein] + phosphate. Functionally, tyrosine-protein phosphatase targeted to sites of actin polymerization in response of varied extracellular stimuli. Has tyrosine phosphatase activity towards various tyrosyl phosphorylated substrates. This Rattus norvegicus (Rat) protein is Tyrosine-protein phosphatase non-receptor type 20 (Ptpn20).